Reading from the N-terminus, the 198-residue chain is Dual specificity protein phosphatase 1 (198 aa).

The segment at 1–20 (MSSRDRGSPSSSSSSSSLPG) is disordered. Residues 8–17 (SPSSSSSSSS) are compositionally biased toward low complexity. The tract at residues 26-47 (EKVKNQIQALVRVIKVARTYRD) is caM binding domain 1. Residues 50–191 (VPSLIEQGLY…LQDLEKSMQV (142 aa)) form the Tyrosine-protein phosphatase domain. Catalysis depends on Cys-135, which acts as the Phosphocysteine intermediate. A caM binding domain 2 region spans residues 151–180 (MKKHGMTLAQALQHVKSKRPVASPNAGFIR).

It belongs to the protein-tyrosine phosphatase family. Non-receptor class dual specificity subfamily. As to quaternary structure, interacts with calmodulin (CaM) in a calcium Ca(2+)-dependent manner. As to expression, expressed in roots, stems, leaves and flowers.

Its subcellular location is the nucleus. The protein localises to the cytoplasm. The catalysed reaction is O-phospho-L-tyrosyl-[protein] + H2O = L-tyrosyl-[protein] + phosphate. It carries out the reaction O-phospho-L-seryl-[protein] + H2O = L-seryl-[protein] + phosphate. It catalyses the reaction O-phospho-L-threonyl-[protein] + H2O = L-threonyl-[protein] + phosphate. Inhibited by sodium vanadate and sodium tungstate. NaF and spermifine repress specifically phosphoserine and phosphothreonine phosphatase activity. In terms of biological role, has a dual specificity toward Ser/Thr and Tyr-containing proteins. Dephosphorylates MPK4 in vitro. The protein is Dual specificity protein phosphatase 1 (DSPTP1) of Arabidopsis thaliana (Mouse-ear cress).